The sequence spans 66 residues: Sec-independent protein translocase protein TatA (66 aa).

Residues 1 to 21 form a helical membrane-spanning segment; sequence MIGGLGMPELIIILVIILIIF. A disordered region spans residues 45-66; that stretch reads RDAELNEGDKDDKEKEQEKLDK.

Belongs to the TatA/E family. In terms of assembly, the Tat system comprises two distinct complexes: a TatABC complex, containing multiple copies of TatA, TatB and TatC subunits, and a separate TatA complex, containing only TatA subunits. Substrates initially bind to the TatABC complex, which probably triggers association of the separate TatA complex to form the active translocon.

The protein localises to the cell inner membrane. Part of the twin-arginine translocation (Tat) system that transports large folded proteins containing a characteristic twin-arginine motif in their signal peptide across membranes. TatA could form the protein-conducting channel of the Tat system. The sequence is that of Sec-independent protein translocase protein TatA from Desulforapulum autotrophicum (strain ATCC 43914 / DSM 3382 / VKM B-1955 / HRM2) (Desulfobacterium autotrophicum).